Consider the following 143-residue polypeptide: Peptide methionine sulfoxide reductase MsrB (143 aa).

A MsrB domain is found at 16-139 (DAELRRRLTP…NSAALNFESR (124 aa)). Zn(2+) is bound by residues Cys-55, Cys-58, Cys-104, and Cys-107. Cys-128 (nucleophile) is an active-site residue.

Belongs to the MsrB Met sulfoxide reductase family. Zn(2+) is required as a cofactor.

It carries out the reaction L-methionyl-[protein] + [thioredoxin]-disulfide + H2O = L-methionyl-(R)-S-oxide-[protein] + [thioredoxin]-dithiol. This chain is Peptide methionine sulfoxide reductase MsrB, found in Burkholderia vietnamiensis (strain G4 / LMG 22486) (Burkholderia cepacia (strain R1808)).